The primary structure comprises 673 residues: Estrogen receptor beta (673 aa).

Residues 1 to 181 (MASSPGLDPH…SAVGKADMHF (181 aa)) form a modulating region. NR C4-type zinc fingers lie at residues 182 to 202 (CAVC…CEGC) and 218 to 242 (CPAT…LRKC). A DNA-binding region (nuclear receptor) is located at residues 182-247 (CAVCHDYASG…RLRKCYEVGM (66 aa)). Residues 316–552 (SPEEFISRIM…DLLLEMLDAN (237 aa)) enclose the NR LBD domain. The interval 553 to 602 (TSSGGSQPSSSPSSETYSDQHQYPQPPSHLHPGSEQTTADHAIVPPLGPT) is disordered. Positions 554-566 (SSGGSQPSSSPSS) are enriched in low complexity.

It belongs to the nuclear hormone receptor family. NR3 subfamily. As to quaternary structure, binds DNA as a homodimer. Can form a heterodimer with ER-alpha. As to expression, abundant in the liver and testes, less abundant in the ovary and barely detectable in the muscle.

The protein localises to the nucleus. Binds estrogens with an affinity similar to that of ER-alpha, and activates expression of reporter genes containing estrogen response elements (ERE) in an estrogen-dependent manner. The chain is Estrogen receptor beta (esr2) from Micropogonias undulatus (Atlantic croaker).